We begin with the raw amino-acid sequence, 264 residues long: Thymidylate synthase (264 aa).

Residue R21 participates in dUMP binding. H51 contributes to the (6R)-5,10-methylene-5,6,7,8-tetrahydrofolate binding site. Position 126–127 (126–127 (RR)) interacts with dUMP. Residue C146 is the Nucleophile of the active site. Residues 166–169 (RSAD), N177, and 207–209 (HLY) contribute to the dUMP site. (6R)-5,10-methylene-5,6,7,8-tetrahydrofolate is bound at residue D169. (6R)-5,10-methylene-5,6,7,8-tetrahydrofolate is bound at residue A263.

The protein belongs to the thymidylate synthase family. Bacterial-type ThyA subfamily. Homodimer.

It localises to the cytoplasm. It catalyses the reaction dUMP + (6R)-5,10-methylene-5,6,7,8-tetrahydrofolate = 7,8-dihydrofolate + dTMP. Its pathway is pyrimidine metabolism; dTTP biosynthesis. Its function is as follows. Catalyzes the reductive methylation of 2'-deoxyuridine-5'-monophosphate (dUMP) to 2'-deoxythymidine-5'-monophosphate (dTMP) while utilizing 5,10-methylenetetrahydrofolate (mTHF) as the methyl donor and reductant in the reaction, yielding dihydrofolate (DHF) as a by-product. This enzymatic reaction provides an intracellular de novo source of dTMP, an essential precursor for DNA biosynthesis. The sequence is that of Thymidylate synthase from Legionella pneumophila (strain Corby).